Here is a 90-residue protein sequence, read N- to C-terminus: Putative Fis-like DNA-binding protein (90 aa).

The segment at residues Q66–K85 is a DNA-binding region (H-T-H motif).

It belongs to the transcriptional regulatory Fis family.

This Xylella fastidiosa (strain 9a5c) protein is Putative Fis-like DNA-binding protein.